The primary structure comprises 192 residues: Adenylate kinase (192 aa).

10–18 (GVPGVGKTT) lines the ATP pocket.

It belongs to the archaeal adenylate kinase family.

The protein localises to the cytoplasm. The catalysed reaction is AMP + ATP = 2 ADP. The polypeptide is Adenylate kinase (Methanoculleus marisnigri (strain ATCC 35101 / DSM 1498 / JR1)).